The following is a 279-amino-acid chain: RNases MRP/P 32.9 kDa subunit (279 aa).

S64 carries the phosphoserine modification.

It belongs to the eukaryotic/archaeal RNase P protein component 1 family. Component of nuclear RNase P and RNase MRP complexes. RNase P consists of an RNA moiety and at least 9 protein subunits including POP1, POP3, POP4, POP5, POP6, POP7, POP8, RPP1 and RPR2. RNase MRP complex consists of an RNA moiety and at least 10 protein subunits including POP1, POP3, POP4, POP5, POP6, POP7, POP8, RMP1, RPP1 and SNM1, many of which are shared with the RNase P complex.

Its subcellular location is the nucleus. Functionally, required for 5.8S rRNA and tRNA processing; associated with RNase MRP and RNase P. The sequence is that of RNases MRP/P 32.9 kDa subunit (POP4) from Saccharomyces cerevisiae (strain ATCC 204508 / S288c) (Baker's yeast).